The following is a 43-amino-acid chain: Photosystem I reaction center subunit IX (43 aa).

Residues 7-27 (YLSVAPVLSALWFGALAGLLI) traverse the membrane as a helical segment.

It belongs to the PsaJ family.

It is found in the plastid. Its subcellular location is the chloroplast thylakoid membrane. Its function is as follows. May help in the organization of the PsaE and PsaF subunits. This is Photosystem I reaction center subunit IX from Oenothera argillicola (Appalachian evening primrose).